The chain runs to 322 residues: MLDKIWYRSKPNLLSRVLQPISLVFIDIANKRKIKQQLKQYKSKIPIIVVGNISVGGTGKTPVVRMLVQQYLAQDKKPAIISRGYGAKADNYPFEVTSGTLATQCGDEPAMLFDALQAQVPIVIAPERVQAVKYIEKNFPDTDIIMSDDGLQHYKLARDKEIVVVDAIRMFGNKLCLPAGPLREPIERLKEVDQIIVIGNCSDKDKELLKNYKNVTYAKVVATEFVNILTAKKVAKTEFNHQNAIAIAGIGNPTKFFKTLEESAINITAKKVFKDHHKFTQSDFEGIDSDITVVMTYKDAIKCKNFAKANWWYLDIALDINV.

ATP is bound at residue 54–61 (SVGGTGKT).

This sequence belongs to the LpxK family.

It catalyses the reaction a lipid A disaccharide + ATP = a lipid IVA + ADP + H(+). It functions in the pathway glycolipid biosynthesis; lipid IV(A) biosynthesis; lipid IV(A) from (3R)-3-hydroxytetradecanoyl-[acyl-carrier-protein] and UDP-N-acetyl-alpha-D-glucosamine: step 6/6. Functionally, transfers the gamma-phosphate of ATP to the 4'-position of a tetraacyldisaccharide 1-phosphate intermediate (termed DS-1-P) to form tetraacyldisaccharide 1,4'-bis-phosphate (lipid IVA). This chain is Tetraacyldisaccharide 4'-kinase, found in Francisella tularensis subsp. holarctica (strain FTNF002-00 / FTA).